A 462-amino-acid polypeptide reads, in one-letter code: Succinate semialdehyde dehydrogenase [NAD(P)+] Sad (462 aa).

NADP(+) contacts are provided by residues 136–137, 160–163, and 212–213; these read WN, KHAP, and GS. Residue Glu234 is the Proton acceptor of the active site. Leu235 contributes to the NADP(+) binding site. The Nucleophile role is filled by Cys268. Position 365 (Glu365) interacts with NADP(+).

The protein belongs to the aldehyde dehydrogenase family. Homodimer.

The catalysed reaction is succinate semialdehyde + NAD(+) + H2O = succinate + NADH + 2 H(+). It catalyses the reaction succinate semialdehyde + NADP(+) + H2O = succinate + NADPH + 2 H(+). It participates in amino-acid degradation; 4-aminobutanoate degradation. Functionally, catalyzes the NAD(+)-dependent oxidation of succinate semialdehyde to succinate. It acts preferentially with NAD as cosubstrate but can also use NADP. Prevents the toxic accumulation of succinate semialdehyde (SSA) and plays an important role when arginine and putrescine are used as the sole nitrogen or carbon sources. This chain is Succinate semialdehyde dehydrogenase [NAD(P)+] Sad (sad), found in Escherichia coli (strain K12).